Consider the following 142-residue polypeptide: Complexin (142 aa).

Disordered regions lie at residues 13–70 and 83–105; these read QLSA…MRQD and IVEA…PEEL. The stretch at 29-138 forms a coiled coil; that stretch reads GDDKEKAEEE…NELKTQIEGK (110 aa). The span at 31–70 shows a compositional bias: basic and acidic residues; the sequence is DKEKAEEEERERQEAIKEAEDRRKEKHRKMEEEREKMRQD. Cys139 is modified (cysteine methyl ester). Cys139 carries S-farnesyl cysteine lipidation. A propeptide spans 140–142 (removed in mature form); that stretch reads VMQ.

The protein belongs to the complexin/synaphin family. In terms of assembly, binds to the SNARE core complex containing Snap25, synaptobrevin and Syx1A.

The protein resides in the membrane. Functionally, positively regulates a late step in synaptic vesicle exocytosis. The polypeptide is Complexin (cpx) (Drosophila melanogaster (Fruit fly)).